Here is an 820-residue protein sequence, read N- to C-terminus: DNA mismatch repair protein MutS (820 aa).

618 to 625 (GPNMAGKS) is an ATP binding site.

Belongs to the DNA mismatch repair MutS family.

Its function is as follows. This protein is involved in the repair of mismatches in DNA. It is possible that it carries out the mismatch recognition step. This protein has a weak ATPase activity. The protein is DNA mismatch repair protein MutS of Chlamydia trachomatis serovar A (strain ATCC VR-571B / DSM 19440 / HAR-13).